A 486-amino-acid polypeptide reads, in one-letter code: Replication factor C large subunit (486 aa).

46-53 (GPPGSGKT) provides a ligand contact to ATP. Residues 419–486 (VKKETPKKTE…KKQATLDSFF (68 aa)) form a disordered region. 2 stretches are compositionally biased toward basic and acidic residues: residues 420–432 (KKET…KPKE) and 442–480 (RISE…KKQA).

It belongs to the activator 1 small subunits family. RfcL subfamily. In terms of assembly, heteromultimer composed of small subunits (RfcS) and large subunits (RfcL).

Functionally, part of the RFC clamp loader complex which loads the PCNA sliding clamp onto DNA. This is Replication factor C large subunit from Methanococcus maripaludis (strain DSM 14266 / JCM 13030 / NBRC 101832 / S2 / LL).